Here is a 1379-residue protein sequence, read N- to C-terminus: DNA-directed RNA polymerase subunit beta (1379 aa).

Belongs to the RNA polymerase beta chain family. The RNAP catalytic core consists of 2 alpha, 1 beta, 1 beta' and 1 omega subunit. When a sigma factor is associated with the core the holoenzyme is formed, which can initiate transcription.

It catalyses the reaction RNA(n) + a ribonucleoside 5'-triphosphate = RNA(n+1) + diphosphate. Its function is as follows. DNA-dependent RNA polymerase catalyzes the transcription of DNA into RNA using the four ribonucleoside triphosphates as substrates. The protein is DNA-directed RNA polymerase subunit beta of Chelativorans sp. (strain BNC1).